The sequence spans 1334 residues: Rho1 guanine nucleotide exchange factor 1 (1334 aa).

Disordered stretches follow at residues 1–89, 135–182, 203–245, and 381–402; these read MDYR…ASPV, PQVS…SDSV, LDQN…TSGT, and SLINDRSSTTTPTFVNSEASSP. The segment covering 138–149 has biased composition (low complexity); it reads SNHAPNNSNSPS. Over residues 150–164 the composition is skewed to polar residues; sequence LTWHTSSGDDSNQNP. The span at 170-180 shows a compositional bias: low complexity; sequence QSQSSTSPVSD. Composition is skewed to polar residues over residues 213–227, 234–245, and 381–400; these read VRSSKNPFLSSNSRL, HTVGSHSFTSGT, and SLINDRSSTTTPTFVNSEAS. Ser381 carries the post-translational modification Phosphoserine. Residues 621-808 form the DH domain; that stretch reads KRQEVICEVI…RGFLSRLNVE (188 aa). The PH domain occupies 843–973; that stretch reads QLIFKGPLKK…WLEHIDNQQT (131 aa). Positions 995–1293 constitute a CNH domain; sequence DNKVNAIGVY…RLLADGRGKL (299 aa).

The protein resides in the cytoplasm. Its function is as follows. Stimulates the exchange of Rho1 and Rho5 GDP-bound form into GTP-bound form. Controls septum formation, cell wall synthesis and localization of F-actin patches. Coordinates actin deposition with cell wall biosynthesis during bipolar growth. The chain is Rho1 guanine nucleotide exchange factor 1 (rgf1) from Schizosaccharomyces pombe (strain 972 / ATCC 24843) (Fission yeast).